The following is a 312-amino-acid chain: 4-diphosphocytidyl-2-C-methyl-D-erythritol kinase (312 aa).

The active site involves K10. 105-115 (PVAGGMAGGSA) serves as a coordination point for ATP. D146 is an active-site residue.

This sequence belongs to the GHMP kinase family. IspE subfamily.

It carries out the reaction 4-CDP-2-C-methyl-D-erythritol + ATP = 4-CDP-2-C-methyl-D-erythritol 2-phosphate + ADP + H(+). The protein operates within isoprenoid biosynthesis; isopentenyl diphosphate biosynthesis via DXP pathway; isopentenyl diphosphate from 1-deoxy-D-xylulose 5-phosphate: step 3/6. Catalyzes the phosphorylation of the position 2 hydroxy group of 4-diphosphocytidyl-2C-methyl-D-erythritol. The sequence is that of 4-diphosphocytidyl-2-C-methyl-D-erythritol kinase from Corynebacterium glutamicum (strain R).